Here is a 268-residue protein sequence, read N- to C-terminus: Sexual development regulator velC (268 aa).

Residues 1–13 are compositionally biased toward basic and acidic residues; sequence MPHGFDKLLHPEP. Disordered stretches follow at residues 1 to 124 and 142 to 165; these read MPHG…DNFS and DPDP…NPPH. Pro residues predominate over residues 14–26; it reads EPQSPSPPPPPRR. The 230-residue stretch at 28-257 folds into the Velvet domain; sequence STQSRYHLHI…ELGFVELKTR (230 aa). Residues 92 to 121 are compositionally biased toward basic and acidic residues; that stretch reads DGNRDREREREHERERERERETDGVARTDD.

This sequence belongs to the velvet family. VelC subfamily. As to quaternary structure, interacts with velA and vosA.

It localises to the nucleus. Its function is as follows. Velvet-domain-containing protein that acts as a positive regulator of sexual development. This Penicillium rubens (strain ATCC 28089 / DSM 1075 / NRRL 1951 / Wisconsin 54-1255) (Penicillium chrysogenum) protein is Sexual development regulator velC.